Here is a 725-residue protein sequence, read N- to C-terminus: MRLLKVATCNLNQWAMDFESNMKNIKASIAEAKAAGAVIRLGPELEVTGYGCEDHFLELDTVTHAWECLKELLLGDWTDDILCSIGMPVIKGAERYNCQVLCMNRRIIMIRPKMWLANDGNYRELRWFTAWKQREELEEFQLPIEISEALEQKSVPFGYGYIQFIDTAVAAEVCEELFSPLPPHAELALNGVEVFMNASGSHHQLRKLDIRLNAFMGATHARGGVYMYSNQQGCDGSRLYYDGCACIVVNGNVVAQGSQFSLRDVEVIISQVDLDAVASLRGSISSFQEQASCKVKVSSVAVPCRLTQSFNLKMTLSSPKKIIYHSPQEEIAFGPACWMWDYLRRSGASGFLLPLSGGADSSSVAAIVGCMCQLVVKEIAKGDEQVKADANRIGNYANGQFPTDSKEFAKRIFYTVFMGSENSSEETKRRSKQLADEIGAWHLDVCIDGVVSAVLSLFQTVTGKRPRYKVDGGSNAENLGLQNIQARMRMVLAFMLASLLPWVHSKPGFYLVLGSSNVDEGLRGYLTKYDCSSADINPIGSISKMDLRLFLKWAATNLGYPSLAEIEAAPPTAELEPIRSDYSQLDEVDMGMTYEELSVYGRMRKIFRCGPVSMFKNLCYKWGTKLSPAEVAEKVKYFFKYYSINRHKMTVLTPSYHAESYSPEDNRFDLRQFLYNSKWPYQFKKIDEIVDSLNGDSVAFPEEEANSNKEIGVVAANSGDPSAGL.

Residues 4–274 (LKVATCNLNQ…VEVIISQVDL (271 aa)) form the CN hydrolase domain. The active-site Proton acceptor; for glutaminase activity is the Glu-44. Lys-113 functions as the For glutaminase activity in the catalytic mechanism. Residue Cys-174 is the Nucleophile; for glutaminase activity of the active site. The segment at 324–709 (YHSPQEEIAF…FPEEEANSNK (386 aa)) is ligase. Residue 354-361 (PLSGGADS) coordinates ATP. The active site involves Ser-356.

This sequence in the C-terminal section; belongs to the NAD synthetase family.

The enzyme catalyses deamido-NAD(+) + L-glutamine + ATP + H2O = L-glutamate + AMP + diphosphate + NAD(+) + H(+). Its pathway is cofactor biosynthesis; NAD(+) biosynthesis; NAD(+) from deamido-NAD(+) (L-Gln route): step 1/1. This Arabidopsis thaliana (Mouse-ear cress) protein is Glutamine-dependent NAD(+) synthetase.